Consider the following 465-residue polypeptide: Zinc finger and BTB domain-containing protein 32 (465 aa).

Residues 29–87 (CDTLITVGGLEFPAHSLVLAGASPRLGCRGRWALVEDISPSTFAQILTFVYGESIELQP) form the BTB domain. Disordered regions lie at residues 111–179 (RAQK…EMAG) and 285–310 (QNQLASSSPTPGSFPQGTESLSPWQI). 2 stretches are compositionally biased toward basic and acidic residues: residues 123–139 (PGLKRHQQSEDFMRGSE) and 147–176 (EKQKPEKDFRSNGREQEMSHKHKAPGERPE). 3 consecutive C2H2-type zinc fingers follow at residues 350–372 (YSCSVCGKRFSLKHQMETHYRVH), 378–400 (FSCSLCPQRSRDFSAMTKHLRTH), and 405–427 (YRCPLCRAGCPSLASMQAHMRGH).

This sequence belongs to the krueppel C2H2-type zinc-finger protein family. As to quaternary structure, homodimer (via PTB domain). Interacts with the N-terminal of FANCC. Interacts with ZBTB16. Interacts with GATA3. In terms of tissue distribution, isoform 1 is testis-specific and is not expressed in lymphoid organs such as thymus or spleen. Isoform 2 is expressed in both B- and T-lymphoid cells.

The protein resides in the nucleus. DNA-binding protein that binds to the to a 5'-TGTACAGTGT-3' core sequence. May function as a transcriptional transactivator and transcriptional repressor. Probably exerts its repressor effect by preventing GATA3 from binding to DNA. May play a role in regulating the differentiation and activation of helper T-cells. This is Zinc finger and BTB domain-containing protein 32 (Zbtb32) from Mus musculus (Mouse).